Reading from the N-terminus, the 434-residue chain is 3-phosphoshikimate 1-carboxyvinyltransferase (434 aa).

Residues Lys22, Ser23, and Arg27 each coordinate 3-phosphoshikimate. Lys22 is a phosphoenolpyruvate binding site. Residues Gly93 and Arg121 each coordinate phosphoenolpyruvate. Ser168, Ser169, Gln170, Ser199, Asp320, and Lys347 together coordinate 3-phosphoshikimate. Gln170 is a phosphoenolpyruvate binding site. Asp320 functions as the Proton acceptor in the catalytic mechanism. Arg351, Arg394, and Lys419 together coordinate phosphoenolpyruvate.

This sequence belongs to the EPSP synthase family. As to quaternary structure, monomer.

The protein localises to the cytoplasm. It carries out the reaction 3-phosphoshikimate + phosphoenolpyruvate = 5-O-(1-carboxyvinyl)-3-phosphoshikimate + phosphate. It participates in metabolic intermediate biosynthesis; chorismate biosynthesis; chorismate from D-erythrose 4-phosphate and phosphoenolpyruvate: step 6/7. Its function is as follows. Catalyzes the transfer of the enolpyruvyl moiety of phosphoenolpyruvate (PEP) to the 5-hydroxyl of shikimate-3-phosphate (S3P) to produce enolpyruvyl shikimate-3-phosphate and inorganic phosphate. In Burkholderia lata (strain ATCC 17760 / DSM 23089 / LMG 22485 / NCIMB 9086 / R18194 / 383), this protein is 3-phosphoshikimate 1-carboxyvinyltransferase.